The following is a 251-amino-acid chain: tRNA (guanine-N(1)-)-methyltransferase (251 aa).

S-adenosyl-L-methionine-binding positions include G113 and 133–138 (IGDYVL).

It belongs to the RNA methyltransferase TrmD family. In terms of assembly, homodimer.

It is found in the cytoplasm. The enzyme catalyses guanosine(37) in tRNA + S-adenosyl-L-methionine = N(1)-methylguanosine(37) in tRNA + S-adenosyl-L-homocysteine + H(+). Specifically methylates guanosine-37 in various tRNAs. In Pectobacterium carotovorum subsp. carotovorum (strain PC1), this protein is tRNA (guanine-N(1)-)-methyltransferase.